The primary structure comprises 101 residues: uncharacterized protein (101 aa).

The segment covering 1-11 (MSDEGYRELVE) has biased composition (basic and acidic residues). Positions 1–26 (MSDEGYRELVESKSAPTTPGPWSPDR) are disordered.

This is an uncharacterized protein from Torque teno canis virus (isolate Cf-TTV10).